The chain runs to 1342 residues: DNA-directed RNA polymerase subunit beta (1342 aa).

2 positions are modified to N6-acetyllysine: Lys-1022 and Lys-1200.

It belongs to the RNA polymerase beta chain family. In terms of assembly, the RNAP catalytic core consists of 2 alpha, 1 beta, 1 beta' and 1 omega subunit. When a sigma factor is associated with the core the holoenzyme is formed, which can initiate transcription.

It carries out the reaction RNA(n) + a ribonucleoside 5'-triphosphate = RNA(n+1) + diphosphate. Functionally, DNA-dependent RNA polymerase catalyzes the transcription of DNA into RNA using the four ribonucleoside triphosphates as substrates. The protein is DNA-directed RNA polymerase subunit beta of Escherichia coli O81 (strain ED1a).